Reading from the N-terminus, the 146-residue chain is Putative inactive cytochrome P450 2G1 (146 aa).

C91 lines the heme pocket.

Belongs to the cytochrome P450 family. Requires heme as cofactor.

The polypeptide is Putative inactive cytochrome P450 2G1 (CYP2G1P) (Homo sapiens (Human)).